The sequence spans 233 residues: Large ribosomal subunit protein uL1 (233 aa).

It belongs to the universal ribosomal protein uL1 family. In terms of assembly, part of the 50S ribosomal subunit.

In terms of biological role, binds directly to 23S rRNA. The L1 stalk is quite mobile in the ribosome, and is involved in E site tRNA release. Its function is as follows. Protein L1 is also a translational repressor protein, it controls the translation of the L11 operon by binding to its mRNA. This Campylobacter curvus (strain 525.92) protein is Large ribosomal subunit protein uL1.